The sequence spans 301 residues: Probable 5-dehydro-4-deoxyglucarate dehydratase (301 aa).

It belongs to the DapA family.

The enzyme catalyses 5-dehydro-4-deoxy-D-glucarate + H(+) = 2,5-dioxopentanoate + CO2 + H2O. It functions in the pathway carbohydrate acid metabolism; D-glucarate degradation; 2,5-dioxopentanoate from D-glucarate: step 2/2. The polypeptide is Probable 5-dehydro-4-deoxyglucarate dehydratase (Cereibacter sphaeroides (strain ATCC 17023 / DSM 158 / JCM 6121 / CCUG 31486 / LMG 2827 / NBRC 12203 / NCIMB 8253 / ATH 2.4.1.) (Rhodobacter sphaeroides)).